We begin with the raw amino-acid sequence, 233 residues long: MNKILLQCDNLCKRYQEGSVQTDVLHNVSFSVGEGEMMAIVGSSGSGKSTLLHLLGGLDTPTSGDVIFNGQPMSKLSSAAKAELRNQKLGFIYQFHHLLPDFTALENVAMPLLIGKKKPAEINSRALEMLKAVGLEHRANHRPSELSGGERQRVAIARALVNNPRLVLADEPTGNLDARNADSIFQLLGELNRLQGTAFLVVTHDLQLAKRMSRQLEMRDGRLTAELSLMGAE.

Residues Leu6 to Glu233 form the ABC transporter domain. Gly42–Ser49 is a binding site for ATP.

The protein belongs to the ABC transporter superfamily. Lipoprotein translocase (TC 3.A.1.125) family. As to quaternary structure, the complex is composed of two ATP-binding proteins (LolD) and two transmembrane proteins (LolC and LolE).

The protein resides in the cell inner membrane. Part of the ABC transporter complex LolCDE involved in the translocation of mature outer membrane-directed lipoproteins, from the inner membrane to the periplasmic chaperone, LolA. Responsible for the formation of the LolA-lipoprotein complex in an ATP-dependent manner. This is Lipoprotein-releasing system ATP-binding protein LolD from Escherichia coli O6:K15:H31 (strain 536 / UPEC).